Reading from the N-terminus, the 377-residue chain is Alanine racemase (377 aa).

Lys35 functions as the Proton acceptor; specific for D-alanine in the catalytic mechanism. Lys35 carries the N6-(pyridoxal phosphate)lysine modification. Arg130 is a binding site for substrate. Tyr260 (proton acceptor; specific for L-alanine) is an active-site residue. Met312 provides a ligand contact to substrate.

Belongs to the alanine racemase family. It depends on pyridoxal 5'-phosphate as a cofactor.

It catalyses the reaction L-alanine = D-alanine. It participates in amino-acid biosynthesis; D-alanine biosynthesis; D-alanine from L-alanine: step 1/1. Catalyzes the interconversion of L-alanine and D-alanine. May also act on other amino acids. In Leptothrix cholodnii (strain ATCC 51168 / LMG 8142 / SP-6) (Leptothrix discophora (strain SP-6)), this protein is Alanine racemase (alr).